An 89-amino-acid polypeptide reads, in one-letter code: Small ribosomal subunit protein uS15 (89 aa).

It belongs to the universal ribosomal protein uS15 family. In terms of assembly, part of the 30S ribosomal subunit. Forms a bridge to the 50S subunit in the 70S ribosome, contacting the 23S rRNA.

One of the primary rRNA binding proteins, it binds directly to 16S rRNA where it helps nucleate assembly of the platform of the 30S subunit by binding and bridging several RNA helices of the 16S rRNA. Functionally, forms an intersubunit bridge (bridge B4) with the 23S rRNA of the 50S subunit in the ribosome. The sequence is that of Small ribosomal subunit protein uS15 from Klebsiella pneumoniae subsp. pneumoniae (strain ATCC 700721 / MGH 78578).